Consider the following 232-residue polypeptide: Putative membrane protein ORF8 (232 aa).

Positions G71 to D84 are enriched in low complexity. Positions G71 to H121 are disordered. Helical transmembrane passes span V166 to A182 and L195 to V211.

It localises to the membrane. This is Putative membrane protein ORF8 (ORF8) from Ictalurid herpesvirus 1 (strain Auburn) (IcHV-1).